The primary structure comprises 423 residues: Probable sodium/metabolite cotransporter BASS3, chloroplastic (423 aa).

A chloroplast-targeting transit peptide spans 1–45; it reads MAAAVAASSSSSSSSCAAVGVATASHPHRHRQARFVVSPPAPASP. Transmembrane regions (helical) follow at residues 106 to 126, 138 to 158, 165 to 187, 192 to 214, 231 to 251, 254 to 274, 287 to 307, 318 to 338, and 380 to 400; these read ALLP…PATF, LGGI…ALAF, TIGY…RAFG, FFAG…ASFL, ISSV…VVPV, IAMA…GLLL, PVMP…PLAI, FLLL…GYWI, and VPAA…ASYW.

The protein belongs to the bile acid:sodium symporter (BASS) (TC 2.A.28) family.

It is found in the membrane. The protein resides in the plastid. It localises to the chloroplast envelope. Its function is as follows. May function as sodium-coupled metabolite transporter across the chloroplast envelope. This Oryza sativa subsp. japonica (Rice) protein is Probable sodium/metabolite cotransporter BASS3, chloroplastic (BASS3).